Here is a 479-residue protein sequence, read N- to C-terminus: Cardiolipin synthase A (479 aa).

The next 2 membrane-spanning stretches (helical) occupy residues 8–28 and 38–58; these read FFGYVLGLVHLLGIIAALHAV and IAWAMSLFFIPYFTLIPYLVF. PLD phosphodiesterase domains lie at 218 to 245 and 392 to 419; these read VNFRNHRKIVVVDGVTGFIGGHNVGDEY and QPGFLHQKVVLVDDEVSAIGSANLDNRS. Catalysis depends on residues H223, K225, D230, H397, K399, and D404.

The protein belongs to the phospholipase D family. Cardiolipin synthase subfamily. ClsA sub-subfamily.

It localises to the cell inner membrane. It catalyses the reaction 2 a 1,2-diacyl-sn-glycero-3-phospho-(1'-sn-glycerol) = a cardiolipin + glycerol. Functionally, catalyzes the reversible phosphatidyl group transfer from one phosphatidylglycerol molecule to another to form cardiolipin (CL) (diphosphatidylglycerol) and glycerol. This is Cardiolipin synthase A from Pseudomonas putida (strain W619).